We begin with the raw amino-acid sequence, 399 residues long: G2/mitotic-specific cyclin-B2 (399 aa).

The disordered stretch occupies residues 58 to 78; the sequence is PVKATKGPGKMTNTVVPPKPP.

It belongs to the cyclin family. Cyclin AB subfamily. In terms of assembly, interacts with the CDK1 protein kinase to form a serine/threonine kinase holoenzyme complex also known as maturation promoting factor (MPF). The cyclin subunit imparts substrate specificity to the complex.

Functionally, essential for the control of the cell cycle at the G2/M (mitosis) transition. The chain is G2/mitotic-specific cyclin-B2 (CCNB2) from Gallus gallus (Chicken).